The chain runs to 243 residues: Tyrosine recombinase XerD-like (243 aa).

The region spanning 1 to 72 is the Core-binding (CB) domain; sequence MKQAIESFIQ…AVNQFLYFLY (72 aa). In terms of domain architecture, Tyr recombinase spans 91–243; it reads SVKKKLERED…KTSMSLEKFR (153 aa). Residues K149 and R210 contribute to the active site.

This sequence belongs to the 'phage' integrase family. XerD-like subfamily.

It is found in the cytoplasm. Functionally, putative tyrosine recombinase. Not involved in the cutting and rejoining of the recombining DNA molecules on dif(SL) site. This is Tyrosine recombinase XerD-like from Streptococcus suis (strain 98HAH33).